The following is a 132-amino-acid chain: Small ribosomal subunit protein uS8 (132 aa).

Belongs to the universal ribosomal protein uS8 family. As to quaternary structure, part of the 30S ribosomal subunit. Contacts proteins S5 and S12.

Its function is as follows. One of the primary rRNA binding proteins, it binds directly to 16S rRNA central domain where it helps coordinate assembly of the platform of the 30S subunit. The protein is Small ribosomal subunit protein uS8 of Rhodospirillum rubrum (strain ATCC 11170 / ATH 1.1.1 / DSM 467 / LMG 4362 / NCIMB 8255 / S1).